The sequence spans 837 residues: MSLSHLYRDGEGRIDDDDDERENFEITDWDLQNEFNPNRQRHWQTKEEATYGVWAERDSDDERPSFGGKRARDYSAPVNFISAGLKKGAAEEAELEDSDDEEKPVKQDDFPKDFGPRKLKTGGNFKPSQKGFAGGTKSFMDFGSWERHTKGIGQKLLQKMGYVPGRGLGKNAQGIINPIEAKQRKGKGAVGAYGSERTTQSMQDFPVVDSEEEAEEEFQKELSQWRKDPSGSKKKPKYSYKTVEELKAKGRISKKLTAPQKELSQVKVIDMTGREQKVYYSYSQISHKHNVPDDGLPLQSQQLPQSGKEAKAPGFALPELEHNLQLLIDLTEQEIIQNDRQLQYERDMVVNLFHELEKMTEVLDHEERVISNLSKVLEMVEECERRMQPDCSNPLTLDECARIFETLQDKYYEEYRMSDRVDLAVAIVYPLMKEYFKEWDPLRDCTYGTEIISKWKSLLENDQLLSHGGQDLSADAFHRLIWEVWMPFVRNIVTQWQPRNCDPMVDFLDSWVHIIPVWILDNILDQLIFPKLQKEVENWNPLTDTVPIHSWIHPWLPLMQARLEPLYSPIRSKLSSALQKWHPSDSSAKLILQPWKDVFTPGSWEAFMVKNIVPKLGMCLGELVINPHQQHMDAFYWVIDWEGMISVSSLVGLLEKHFFPKWLQVLCSWLSNSPNYEEITKWYLGWKSMFSDQVLAHPSVKDKFNEALDIMNRAVSSNVGAYMQPGARENIAYLTHTERRKDFQYEAMQERREAENMAQRGIGVAASSVPMNFKDLIETKAEEHNIVFMPVIGKRHEGKQLYTFGRIVIYIDRGVVFVQGEKTWVPTSLQSLIDMAK.

Basic and acidic residues-rich tracts occupy residues 1–13 (MSLS…GEGR) and 53–64 (VWAERDSDDERP). Disordered stretches follow at residues 1–21 (MSLS…DDER), 53–72 (VWAE…KRAR), and 85–133 (LKKG…KGFA). The required for interaction with DHX15 stretch occupies residues 1–50 (MSLSHLYRDGEGRIDDDDDERENFEITDWDLQNEFNPNRQRHWQTKEEAT). Phosphoserine occurs at positions 2, 59, and 98. The span at 91 to 102 (EEAELEDSDDEE) shows a compositional bias: acidic residues. The span at 103-116 (KPVKQDDFPKDFGP) shows a compositional bias: basic and acidic residues. Ser-144 carries the phosphoserine modification. In terms of domain architecture, G-patch spans 149-195 (TKGIGQKLLQKMGYVPGRGLGKNAQGIINPIEAKQRKGKGAVGAYGS). The interval 179-236 (IEAKQRKGKGAVGAYGSERTTQSMQDFPVVDSEEEAEEEFQKELSQWRKDPSGSKKKP) is disordered. Ser-210 bears the Phosphoserine mark. Positions 217–231 (EFQKELSQWRKDPSG) are enriched in basic and acidic residues. The Nuclear localization signal motif lies at 700 to 705 (VKDKFN). Positions 710–734 (IMNRAVSSNVGAYMQPGARENIAYL) are required for nuclear speckle localization.

Belongs to the TFP11/STIP family. Identified in the spliceosome C complex. Found in the Intron Large (IL) complex, a post-mRNA release spliceosomal complex containing the excised intron, U2, U5 and U6 snRNPs, and splicing factors. Interacts with TUFT1. Interacts with DHX15; indicative for a recruitment of DHX15 to the IL complex. Interacts with GCFC2.

The protein resides in the cytoplasm. The protein localises to the nucleus. In terms of biological role, involved in pre-mRNA splicing, specifically in spliceosome disassembly during late-stage splicing events. Intron turnover seems to proceed through reactions in two lariat-intron associated complexes termed Intron Large (IL) and Intron Small (IS). In cooperation with DHX15 seems to mediate the transition of the U2, U5 and U6 snRNP-containing IL complex to the snRNP-free IS complex leading to efficient debranching and turnover of excised introns. May play a role in the differentiation of ameloblasts and odontoblasts or in the forming of the enamel extracellular matrix. In Pan troglodytes (Chimpanzee), this protein is Tuftelin-interacting protein 11 (TFIP11).